The primary structure comprises 254 residues: Imidazole glycerol phosphate synthase subunit HisF (254 aa).

Catalysis depends on residues D11 and D130.

This sequence belongs to the HisA/HisF family. Heterodimer of HisH and HisF.

Its subcellular location is the cytoplasm. It carries out the reaction 5-[(5-phospho-1-deoxy-D-ribulos-1-ylimino)methylamino]-1-(5-phospho-beta-D-ribosyl)imidazole-4-carboxamide + L-glutamine = D-erythro-1-(imidazol-4-yl)glycerol 3-phosphate + 5-amino-1-(5-phospho-beta-D-ribosyl)imidazole-4-carboxamide + L-glutamate + H(+). Its pathway is amino-acid biosynthesis; L-histidine biosynthesis; L-histidine from 5-phospho-alpha-D-ribose 1-diphosphate: step 5/9. In terms of biological role, IGPS catalyzes the conversion of PRFAR and glutamine to IGP, AICAR and glutamate. The HisF subunit catalyzes the cyclization activity that produces IGP and AICAR from PRFAR using the ammonia provided by the HisH subunit. The chain is Imidazole glycerol phosphate synthase subunit HisF from Staphylococcus carnosus (strain TM300).